Reading from the N-terminus, the 246-residue chain is Sugar fermentation stimulation protein homolog (246 aa).

This sequence belongs to the SfsA family.

The chain is Sugar fermentation stimulation protein homolog from Prochlorococcus marinus (strain MIT 9312).